The following is a 316-amino-acid chain: tRNA dimethylallyltransferase (316 aa).

17–24 (GPTASGKT) serves as a coordination point for ATP. 19-24 (TASGKT) lines the substrate pocket. 4 interaction with substrate tRNA regions span residues 42 to 45 (DSVL), 166 to 170 (QRLSR), 247 to 252 (RCVGYR), and 280 to 287 (KRQITWLR).

This sequence belongs to the IPP transferase family. As to quaternary structure, monomer. Mg(2+) serves as cofactor.

It carries out the reaction adenosine(37) in tRNA + dimethylallyl diphosphate = N(6)-dimethylallyladenosine(37) in tRNA + diphosphate. Its function is as follows. Catalyzes the transfer of a dimethylallyl group onto the adenine at position 37 in tRNAs that read codons beginning with uridine, leading to the formation of N6-(dimethylallyl)adenosine (i(6)A). This is tRNA dimethylallyltransferase from Shigella flexneri.